A 642-amino-acid chain; its full sequence is MDEANIQDKERFASRENHCEIERRRRNKMTAYITELSDMVPTCSALARKPDKLTILRMAVAHMKALRGTGNTSSDGTYKPSFLTDQELKHLILEAADGFLFVVSCDSGRVIYVSDSVTPVLNYTQSDWYGTSLYEHIHPDDREKIREQLSTQESQNAGRILDLKSGTVKKEGHQSSMRLSMGARRGFICRMRVGNVNPESMVSGHLNRLKQRNSLGPSRDGTNYAVVHCTGYIKNWPPTDMFPNMHMERDVDDMSSHCCLVAIGRLQVTSTAANDMSGSNNQSEFITRHAMDGKFTFVDQRVLNILGYTPTELLGKICYDFFHPEDQSHMKESFDQVLKQKGQMFSLLYRARAKNSEYVWLRTQAYAFLNPYTDEVEYIVCTNSSGKTMHGAPLDAAAAHTPEQVQQQQQQEQHVYVQAAPGVDYARRELTPVGSATNDGMYQTHMLAMQAPTPQQQQQQQQRPGSAQTTPVGYTYDTTHSPYSAGGPSPLAKIPKSGTSPTPVAPNSWAALRPQQQQQQQQPVTEGYQYQQTSPARSPSGPTYTQLSAGNGNRQQAQPGAYQAGPPPPPNAPGMWDWQQAGGHPHPPHPTAHPHHPHAHPGGPAGAGQPQGQEFSDMLQMLDHTPTTFEDLNINMFSTPFE.

The 54-residue stretch at 13–66 folds into the bHLH domain; the sequence is ASRENHCEIERRRRNKMTAYITELSDMVPTCSALARKPDKLTILRMAVAHMKAL. PAS domains follow at residues 85 to 156 and 271 to 341; these read DQEL…ESQN and TAAN…LKQK. The 44-residue stretch at 346 to 389 folds into the PAC domain; sequence SLLYRARAKNSEYVWLRTQAYAFLNPYTDEVEYIVCTNSSGKTM. Residues 450 to 612 form a disordered region; the sequence is QAPTPQQQQQ…GPAGAGQPQG (163 aa). Polar residues-rich tracts occupy residues 463-482 and 528-554; these read RPGS…THSP and YQYQ…NGNR. A compositionally biased stretch (low complexity) spans 555–564; it reads QQAQPGAYQA.

In terms of assembly, efficient DNA binding requires dimerization with another bHLH protein. Heterodimer with ahr, trh or sim. In terms of tissue distribution, at stage 11, expression is detected in tracheal pits. At later stages, strong expression is also detected in the CNS.

The protein resides in the nucleus. Heterodimers of tgo/trh are involved in the control of breathless expression. Plays a role in the cellular or tissue response to oxygen deprivation. The protein is Aryl hydrocarbon receptor nuclear translocator homolog (tgo) of Drosophila melanogaster (Fruit fly).